The following is a 118-amino-acid chain: Large ribosomal subunit protein uL18 (118 aa).

Belongs to the universal ribosomal protein uL18 family. As to quaternary structure, part of the 50S ribosomal subunit; part of the 5S rRNA/L5/L18/L25 subcomplex. Contacts the 5S and 23S rRNAs.

This is one of the proteins that bind and probably mediate the attachment of the 5S RNA into the large ribosomal subunit, where it forms part of the central protuberance. The chain is Large ribosomal subunit protein uL18 from Lactobacillus acidophilus (strain ATCC 700396 / NCK56 / N2 / NCFM).